We begin with the raw amino-acid sequence, 302 residues long: Bifunctional protein FolD (302 aa).

NADP(+) is bound by residues 165 to 167 (GRS), S190, and I231.

Belongs to the tetrahydrofolate dehydrogenase/cyclohydrolase family. As to quaternary structure, homodimer.

It catalyses the reaction (6R)-5,10-methylene-5,6,7,8-tetrahydrofolate + NADP(+) = (6R)-5,10-methenyltetrahydrofolate + NADPH. It carries out the reaction (6R)-5,10-methenyltetrahydrofolate + H2O = (6R)-10-formyltetrahydrofolate + H(+). Its pathway is one-carbon metabolism; tetrahydrofolate interconversion. In terms of biological role, catalyzes the oxidation of 5,10-methylenetetrahydrofolate to 5,10-methenyltetrahydrofolate and then the hydrolysis of 5,10-methenyltetrahydrofolate to 10-formyltetrahydrofolate. The chain is Bifunctional protein FolD from Prochlorococcus marinus (strain MIT 9303).